We begin with the raw amino-acid sequence, 398 residues long: Alpha-2,8-sialyltransferase 8F (398 aa).

The Cytoplasmic portion of the chain corresponds to 1–3 (MRP). A helical; Signal-anchor for type II membrane protein membrane pass occupies residues 4-24 (GGALLALLASLLLLLLLRLLW). Residues 25–398 (CPADAPGRAR…KLQFSKCEVA (374 aa)) are Lumenal-facing. Asparagine 66, asparagine 93, asparagine 151, and asparagine 196 each carry an N-linked (GlcNAc...) asparagine glycan. 2 disulfide bridges follow: cysteine 186-cysteine 335 and cysteine 200-cysteine 395. Substrate-binding positions include asparagine 214, 236-238 (NPS), and 322-324 (STG). Histidine 370 functions as the Proton donor/acceptor in the catalytic mechanism.

Belongs to the glycosyltransferase 29 family.

The protein resides in the golgi apparatus membrane. It carries out the reaction a ganglioside GM3 + CMP-N-acetyl-beta-neuraminate = a ganglioside GD3 + CMP + H(+). The enzyme catalyses a ganglioside GM3 (d18:1(4E)) + CMP-N-acetyl-beta-neuraminate = a ganglioside GD3 (d18:1(4E)) + CMP + H(+). It catalyses the reaction a ganglioside GD1a (d18:1(4E)) + CMP-N-acetyl-beta-neuraminate = a ganglioside GT1a (d18:1(4E)) + CMP + H(+). The catalysed reaction is a ganglioside GD1a + CMP-N-acetyl-beta-neuraminate = a ganglioside GT1a + CMP + H(+). It carries out the reaction a ganglioside GM1b (d18:1(4E)) + CMP-N-acetyl-beta-neuraminate = a ganglioside GD1c (d18:1(4E)) + CMP + H(+). The enzyme catalyses a ganglioside GM1b + CMP-N-acetyl-beta-neuraminate = a ganglioside GD1c + CMP + H(+). It catalyses the reaction a ganglioside GM4 (d18:1(4E)) + CMP-N-acetyl-beta-neuraminate = an N-acetyl-alpha-neuraminosyl-(2-&gt;8)-N-acetyl-alpha-neuraminosyl-(2-&gt;3)-beta-D-galactosyl-(1&lt;-&gt;1')-N-acylsphing-4-enine + CMP + H(+). The catalysed reaction is N-acetyl-alpha-neuraminosyl-(2-&gt;3)-beta-D-galactosyl-(1&lt;-&gt;1')-ceramide + CMP-N-acetyl-beta-neuraminate = N-acetyl-alpha-neuraminosyl-(2-&gt;8)-N-acetyl-alpha-neuraminosyl-(2-&gt;3)-beta-D-galactosyl-(1&lt;-&gt;1')-ceramide + CMP + H(+). It carries out the reaction a ganglioside GT1b (d18:1(4E)) + CMP-N-acetyl-beta-neuraminate = a ganglioside GQ1b (d18:1(4E)) + CMP + H(+). The enzyme catalyses a ganglioside GT1b + CMP-N-acetyl-beta-neuraminate = a ganglioside GQ1b + CMP + H(+). It participates in protein modification; protein glycosylation. In terms of biological role, alpha-2,8-sialyltransferase that prefers O-glycans to N-glycans or glycolipids as acceptor substrates. The minimal acceptor substrate is the NeuAc-alpha-2,3(6)-Gal sequence at the non-reducing end of their carbohydrate groups. This is Alpha-2,8-sialyltransferase 8F (ST8SIA6) from Pan troglodytes (Chimpanzee).